Consider the following 397-residue polypeptide: DnaJ homolog subfamily A member 1 (397 aa).

A J domain is found at 6 to 68 (TYYDVLGVKP…KKRELYDKGG (63 aa)). Residue K66 is modified to N6-acetyllysine. S83 carries the phosphoserine modification. The segment at 121–205 (GATRKLALQK…CNGRKIVREK (85 aa)) adopts a CR-type zinc-finger fold. Positions 134, 137, 150, 153, 177, 180, 193, and 196 each coordinate Zn(2+). CXXCXGXG motif repeat units follow at residues 134–141 (CDKCEGRG), 150–157 (CPNCRGTG), 177–184 (CMECQGHG), and 193–200 (CKSCNGRK). S335 bears the Phosphoserine mark. Residues 352-397 (VEETDEMDQVELVDFDPNQERRRHYNGEAYEDDEHHPRGGVQCQTS) are disordered. Over residues 353–365 (EETDEMDQVELVD) the composition is skewed to acidic residues. Phosphotyrosine is present on Y381. C394 carries the post-translational modification Cysteine methyl ester. A lipid anchor (S-farnesyl cysteine) is attached at C394. A propeptide spans 395–397 (QTS) (removed in mature form).

In terms of assembly, identified in a complex with HSPA1B and BAX. Interacts with RNF207.

It is found in the membrane. Its subcellular location is the cytoplasm. It localises to the microsome. The protein localises to the mitochondrion. The protein resides in the nucleus. It is found in the perinuclear region. Functionally, co-chaperone for HSPA8/Hsc70. Plays a role in protein transport into mitochondria via its role as co-chaperone. Functions as co-chaperone for HSPA1B and negatively regulates the translocation of BAX from the cytosol to mitochondria in response to cellular stress, thereby protecting cells against apoptosis. Stimulates ATP hydrolysis, but not the folding of unfolded proteins mediated by HSPA1A (in vitro). Promotes apoptosis in response to cellular stress mediated by exposure to anisomycin or UV. This is DnaJ homolog subfamily A member 1 (DNAJA1) from Bos taurus (Bovine).